The chain runs to 187 residues: Phosphatidylethanolamine-binding protein 1 (187 aa).

Phosphoserine occurs at positions 6 and 13. T42 is modified (phosphothreonine). 4 positions are modified to phosphoserine: S52, S54, S98, and S153. An interaction with RAF1 region spans residues 93–134 (KGNDISSGTVLSDYVGSGPPKGTGLHRYVWLVYEQDRPLKCD).

It belongs to the phosphatidylethanolamine-binding protein family. Has a tendency to form dimers by disulfide cross-linking. Interacts with RAF1 and this interaction is enhanced if RAF1 is phosphorylated on residues 'Ser-338', 'Ser-339', 'Tyr-340' and 'Tyr-341'. Interacts with ALOX15; in response to IL13/interleukin-13, prevents the interaction of PEBP1 with RAF1 to activate the ERK signaling cascade.

The protein localises to the cytoplasm. Binds ATP, opioids and phosphatidylethanolamine. Has lower affinity for phosphatidylinositol and phosphatidylcholine. Serine protease inhibitor which inhibits thrombin, neuropsin and chymotrypsin but not trypsin, tissue type plasminogen activator and elastase. Inhibits the kinase activity of RAF1 by inhibiting its activation and by dissociating the RAF1/MEK complex and acting as a competitive inhibitor of MEK phosphorylation. In terms of biological role, HCNP may be involved in the function of the presynaptic cholinergic neurons of the central nervous system. HCNP increases the production of choline acetyltransferase but not acetylcholinesterase. Seems to be mediated by a specific receptor. The sequence is that of Phosphatidylethanolamine-binding protein 1 (PEBP1) from Pongo abelii (Sumatran orangutan).